The chain runs to 520 residues: Versicolorin B desaturase (520 aa).

The helical transmembrane segment at 22–42 (IFTTILSIFGIALSAVAAWGI) threads the bilayer. N-linked (GlcNAc...) asparagine glycans are attached at residues asparagine 266 and asparagine 426. Cysteine 462 is a binding site for heme.

Belongs to the cytochrome P450 family. Heme is required as a cofactor.

It is found in the membrane. It carries out the reaction versicolorin B + NADPH + O2 + H(+) = versicolorin A + NADP(+) + 2 H2O. It functions in the pathway mycotoxin biosynthesis. In terms of biological role, versicolorin B desaturase; part of the fragmented gene cluster that mediates the biosynthesis of dothistromin (DOTH), a polyketide toxin very similar in structure to the aflatoxin precursor, versicolorin B. The first step of the pathway is the conversion of acetate to norsolorinic acid (NOR) and requires the fatty acid synthase subunits hexA and hexB, as well as the polyketide synthase pksA. PksA combines a hexanoyl starter unit and 7 malonyl-CoA extender units to synthesize the precursor NOR. The hexanoyl starter unit is provided to the acyl-carrier protein (ACP) domain by the fungal fatty acid synthase hexA/hexB. The second step is the conversion of NOR to averantin (AVN) and requires the norsolorinic acid ketoreductase nor1, which catalyzes the dehydration of norsolorinic acid to form (1'S)-averantin. The cytochrome P450 monooxygenase avnA then catalyzes the hydroxylation of AVN to 5'hydroxyaverantin (HAVN). The next step is performed by adhA that transforms HAVN to averufin (AVF). Averufin might then be converted to hydroxyversicolorone by cypX and avfA. Hydroxyversicolorone is further converted versiconal hemiacetal acetate (VHA) by moxY. VHA is then the substrate for the versiconal hemiacetal acetate esterase est1 to yield versiconal (VAL). Versicolorin B synthase vbsA then converts VAL to versicolorin B (VERB) by closing the bisfuran ring. Then, the activity of the versicolorin B desaturase verB leads to versicolorin A (VERA). DotB, a predicted chloroperoxidase, may perform epoxidation of the A-ring of VERA. Alternatively, a cytochrome P450, such as cypX or avnA could catalyze this step. It is also possible that another, uncharacterized, cytochrome P450 enzyme is responsible for this step. Opening of the epoxide could potentially be achieved by the epoxide hydrolase epoA. However, epoA seems not to be required for DOTH biosynthesis, but other epoxide hydrolases may have the ability to complement this hydrolysis. Alternatively, opening of the epoxide ring could be achieved non-enzymatically. The next step is the deoxygenation of ring A to yield the 5,8-dihydroxyanthraquinone which is most likely catalyzed by the NADPH dehydrogenase encoded by ver1. The last stages of DOTH biosynthesis are proposed to involve hydroxylation of the bisfuran. OrdB and norB might have oxidative roles here. An alternative possibility is that cytochrome P450 monoogenases such as avnA and cypX might perform these steps in addition to previously proposed steps. The protein is Versicolorin B desaturase of Dothistroma septosporum (strain NZE10 / CBS 128990) (Red band needle blight fungus).